Consider the following 104-residue polypeptide: Large ribosomal subunit protein bL28 (104 aa).

This sequence belongs to the bacterial ribosomal protein bL28 family.

The protein is Large ribosomal subunit protein bL28 of Wolbachia sp. subsp. Brugia malayi (strain TRS).